A 441-amino-acid polypeptide reads, in one-letter code: Serine/threonine-protein kinase prk-2 (441 aa).

The Protein kinase domain maps to 31-285; sequence YKLKAELGRG…LEAILNHPWV (255 aa). ATP-binding positions include 37–45 and K60; that span reads LGRGGFGVV. The active-site Proton acceptor is D158. Residues 301 to 364 are disordered; that stretch reads QKKTSESSDD…NQKKPNHKEF (64 aa). The span at 303-320 shows a compositional bias: basic and acidic residues; the sequence is KTSESSDDHHSETLGDHS. Over residues 328–338 the composition is skewed to polar residues; the sequence is PPTSSVSQQPG.

The protein belongs to the protein kinase superfamily. Ser/Thr protein kinase family. PIM subfamily. Requires Mg(2+) as cofactor.

The catalysed reaction is L-seryl-[protein] + ATP = O-phospho-L-seryl-[protein] + ADP + H(+). It carries out the reaction L-threonyl-[protein] + ATP = O-phospho-L-threonyl-[protein] + ADP + H(+). In terms of biological role, involved in the negative regulation of synaptic differentiation in PLM neurons. This Caenorhabditis elegans protein is Serine/threonine-protein kinase prk-2.